Consider the following 114-residue polypeptide: Large ribosomal subunit protein uL24 (114 aa).

This sequence belongs to the universal ribosomal protein uL24 family. Part of the 50S ribosomal subunit.

Its function is as follows. One of two assembly initiator proteins, it binds directly to the 5'-end of the 23S rRNA, where it nucleates assembly of the 50S subunit. In terms of biological role, one of the proteins that surrounds the polypeptide exit tunnel on the outside of the subunit. The chain is Large ribosomal subunit protein uL24 from Thermomicrobium roseum (strain ATCC 27502 / DSM 5159 / P-2).